Here is a 362-residue protein sequence, read N- to C-terminus: UDP-N-acetylglucosamine--N-acetylmuramyl-(pentapeptide) pyrophosphoryl-undecaprenol N-acetylglucosamine transferase (362 aa).

UDP-N-acetyl-alpha-D-glucosamine is bound by residues 14 to 16 (TGG), asparagine 126, arginine 166, serine 193, and glutamine 294.

It belongs to the glycosyltransferase 28 family. MurG subfamily.

Its subcellular location is the cell inner membrane. It carries out the reaction di-trans,octa-cis-undecaprenyl diphospho-N-acetyl-alpha-D-muramoyl-L-alanyl-D-glutamyl-meso-2,6-diaminopimeloyl-D-alanyl-D-alanine + UDP-N-acetyl-alpha-D-glucosamine = di-trans,octa-cis-undecaprenyl diphospho-[N-acetyl-alpha-D-glucosaminyl-(1-&gt;4)]-N-acetyl-alpha-D-muramoyl-L-alanyl-D-glutamyl-meso-2,6-diaminopimeloyl-D-alanyl-D-alanine + UDP + H(+). It participates in cell wall biogenesis; peptidoglycan biosynthesis. Cell wall formation. Catalyzes the transfer of a GlcNAc subunit on undecaprenyl-pyrophosphoryl-MurNAc-pentapeptide (lipid intermediate I) to form undecaprenyl-pyrophosphoryl-MurNAc-(pentapeptide)GlcNAc (lipid intermediate II). This chain is UDP-N-acetylglucosamine--N-acetylmuramyl-(pentapeptide) pyrophosphoryl-undecaprenol N-acetylglucosamine transferase, found in Paracoccus denitrificans (strain Pd 1222).